The following is a 101-amino-acid chain: Small ribosomal subunit protein uS10 (101 aa).

The protein belongs to the universal ribosomal protein uS10 family. In terms of assembly, part of the 30S ribosomal subunit.

In terms of biological role, involved in the binding of tRNA to the ribosomes. This Christiangramia forsetii (strain DSM 17595 / CGMCC 1.15422 / KT0803) (Gramella forsetii) protein is Small ribosomal subunit protein uS10.